A 380-amino-acid chain; its full sequence is Probable RAD2-like endonuclease 076L (380 aa).

Residues 1 to 101 (MGIKNLTQFL…QKIVSKTDAI (101 aa)) form an N-domain region. Asp32, Glu73, Glu191, Glu193, Asp212, Asp214, and Asp281 together coordinate Mg(2+). Residues 156–301 (IDRRRKYEFS…EKAYKYISDY (146 aa)) are I-domain.

This sequence belongs to the XPG/RAD2 endonuclease family. Mg(2+) serves as cofactor.

The protein resides in the host nucleus. Functionally, probable endonuclease. In Invertebrate iridescent virus 3 (IIV-3), this protein is Probable RAD2-like endonuclease 076L.